Reading from the N-terminus, the 38-residue chain is Non-specific lipid-transfer protein P2 (38 aa).

It belongs to the plant LTP family.

It is found in the secreted. Its function is as follows. Plant non-specific lipid-transfer proteins transfer phospholipids as well as galactolipids across membranes. May play a role in wax or cutin deposition in the cell walls of expanding epidermal cells and certain secretory tissues. This Vitis sp. (Grape) protein is Non-specific lipid-transfer protein P2.